Reading from the N-terminus, the 457-residue chain is Argininosuccinate lyase (457 aa).

The protein belongs to the lyase 1 family. Argininosuccinate lyase subfamily.

The protein resides in the cytoplasm. The enzyme catalyses 2-(N(omega)-L-arginino)succinate = fumarate + L-arginine. Its pathway is amino-acid biosynthesis; L-arginine biosynthesis; L-arginine from L-ornithine and carbamoyl phosphate: step 3/3. This Klebsiella pneumoniae (strain 342) protein is Argininosuccinate lyase.